The following is a 295-amino-acid chain: bZIP transcription factor 60 (295 aa).

Positions 101 to 154 (PAAADDSGKENSDLVVEKKSNDSGSEIHDDDDEEGDDDAVAKKRRRRVRNRDAA) are disordered. Over residues 106-127 (DSGKENSDLVVEKKSNDSGSEI) the composition is skewed to basic and acidic residues. Over residues 128-138 (HDDDDEEGDDD) the composition is skewed to acidic residues. One can recognise a bZIP domain in the interval 140–203 (VAKKRRRRVR…QSLRYCLQKG (64 aa)). Residues 142 to 162 (KKRRRRVRNRDAAVRSRERKK) are basic motif. Residues 168–182 (LEKKSKYLERECLRL) are leucine-zipper. A helical transmembrane segment spans residues 224–244 (LLLGSLLWLLGVNFICLFPYM).

This sequence belongs to the bZIP family. As to quaternary structure, interacts with BZIP28. As to expression, expressed in seedlings, rosette and cauline leaves, stems, buds, flowers, siliques, immature seeds, anthers and pollen grains.

The protein localises to the endoplasmic reticulum membrane. Its subcellular location is the nucleus. Functionally, transcription factor involved in the unfolded protein response (UPR). Acts during endoplasmic reticulum stress (ER) by activating unfolded protein response (UPR) target genes via direct binding to the UPR element (UPRE). Plays a role in plant immunity and abiotic stress responses. This Arabidopsis thaliana (Mouse-ear cress) protein is bZIP transcription factor 60.